Consider the following 644-residue polypeptide: Sodium/hydrogen exchanger 9 (644 aa).

Residues 1–20 (MERQRRFMSEKDEYQFQHQG) lie on the Lumenal side of the membrane. Residues 21–41 (AVELLVFNFLLILTILTIWLF) traverse the membrane as a helical segment. Topologically, residues 42–45 (KNHR) are cytoplasmic. The helical transmembrane segment at 46–66 (FRFLHETGGAMVYGLIMGLIL) threads the bilayer. Residues 67–126 (RYATAPTDIESGTVYDCGKLAFSPSTLLINITDQVYEYKYKREISQHNINPHLGNAILEK) are Lumenal-facing. A helical membrane pass occupies residues 127–147 (MTFDPEIFFNVLLPPIIFHAG). Over 148–164 (YSLKKRHFFQNLGSILT) the chain is Cytoplasmic. A helical membrane pass occupies residues 165–185 (YAFLGTAISCIVIGLIMYGFV). The Lumenal segment spans residues 186 to 203 (KAMVYAGQLKNGDFHFTD). The helical transmembrane segment at 204–224 (CLFFGSLMSATDPVTVLAIFH) threads the bilayer. Over 225 to 235 (ELHVDPDLYTL) the chain is Cytoplasmic. A helical transmembrane segment spans residues 236-256 (LFGESVLNDAVAIVLTYSISI). The Lumenal portion of the chain corresponds to 257–277 (YSPKENPNAFDAAAFFQSVGN). The helical transmembrane segment at 278–298 (FLGIFAGSFAMGSAYAVVTAL) threads the bilayer. Over 299–301 (LTK) the chain is Cytoplasmic. 2 helical membrane-spanning segments follow: residues 302 to 322 (FTKL…LSWS) and 323 to 343 (AFLS…FCGV). Residues 344 to 364 (TQAHYTYNNLSLDSKMRTKQL) are Cytoplasmic-facing. Residues 365-385 (FEFMNFLAENVIFCYMGLALF) form a helical membrane-spanning segment. Residue T386 is a topological domain, lumenal. The helical transmembrane segment at 387 to 407 (FQNHIFNALFILGAFLAIFVA) threads the bilayer. At 408–429 (RACNIYPLSFLLNLGRKHKIPW) the chain is on the cytoplasmic side. A helical transmembrane segment spans residues 430–450 (NFQHMMMFSGLRGAIAFALAI). The Lumenal segment spans residues 451–465 (RDTESQPKQMMFSTT). A helical membrane pass occupies residues 466–486 (LLLVFFTVWVFGGGTTPMLTW). Over 487 to 644 (LQIRVGVDLD…EQTPGQSQLN (158 aa)) the chain is Cytoplasmic. The segment at 593 to 622 (QAASPCSPPTRLGLDQKAAPQTPGKENIYE) is disordered.

This sequence belongs to the monovalent cation:proton antiporter 1 (CPA1) transporter (TC 2.A.36) family. As to quaternary structure, homodimer; phosphatidylinositol-4,5-bisphosphate (PIP2) and phosphatidylinositol 3,4,5-trisphosphate (PIP3) could be involved in the dimer stabilization. Interacts (via the C-terminus) with RACK1. Interacts with CHP1.

It is found in the late endosome membrane. It localises to the early endosome membrane. The protein localises to the recycling endosome membrane. Its subcellular location is the cell membrane. The protein resides in the cytoplasmic vesicle. It is found in the phagosome membrane. It catalyses the reaction Na(+)(in) + H(+)(out) = Na(+)(out) + H(+)(in). The enzyme catalyses K(+)(in) + H(+)(out) = K(+)(out) + H(+)(in). In terms of biological role, endosomal Na(+), K(+)/H(+) antiporter. Mediates the electroneutral exchange of endosomal luminal H(+) for a cytosolic Na(+) or K(+). By facilitating proton efflux, SLC9A9 counteracts the acidity generated by vacuolar (V)-ATPase, thereby limiting luminal acidification. Regulates organellar pH and consequently, endosome maturation and endocytic trafficking of plasma membrane receptors and neurotransporters. Promotes the recycling of transferrin receptors back to the cell surface to facilitate additional iron uptake in the brain. Regulates synaptic transmission by regulating the luminal pH of axonal endosomes. Regulates phagosome lumenal pH, thus affecting phagosome maturation, and consequently, microbicidal activity in macrophages. Can also be active at the cell surface of specialized cells, e.g., in the inner ear hair bundles uses the high K(+) of the endolymph to regulate intracelular pH. The sequence is that of Sodium/hydrogen exchanger 9 (SLC9A9) from Equus caballus (Horse).